The following is a 325-amino-acid chain: MLYTSIFAAAMAASGAMAAPTTSHGASNCTTLDSFFKSHGKLYWGTAADKNTLMKPGVADFIAKEFGQVTPENSMKFDATEPSRGQFHFDAADYLVDYAEKHDLLIRGHTFLWWSQMPAWVKAIKDKDTLIDVIQTHISTVAGRYKGKIYAWDVVNEIFEQDGSFRKTVYYNLLGEDYVRIAFEAAHKADPKAKLYINDFNLDDPNAAKLKAMIKYVTKWRAAGWPVHGIGSQSHLFAGMGEKSAAAIKMLGAAADEVAITELDITGAPQADYEAVTKGCIDVKNCVGITSWGARDTDSWLASKSPLLFDGNFKPKAAVKAIMAI.

Positions 1–18 (MLYTSIFAAAMAASGAMA) are cleaved as a signal peptide. Residues 26-325 (ASNCTTLDSF…KAAVKAIMAI (300 aa)) enclose the GH10 domain. N-linked (GlcNAc...) asparagine glycosylation occurs at Asn-28. The active-site Proton donor is Glu-157. The active-site Nucleophile is the Glu-262. Residues Cys-280 and Cys-286 are joined by a disulfide bond.

The protein belongs to the glycosyl hydrolase 10 (cellulase F) family.

The protein localises to the secreted. The catalysed reaction is Endohydrolysis of (1-&gt;4)-beta-D-xylosidic linkages in xylans.. It functions in the pathway glycan degradation; xylan degradation. In terms of biological role, endo-1,4-beta-xylanase involved in the hydrolysis of xylan, a major structural heterogeneous polysaccharide found in plant biomass representing the second most abundant polysaccharide in the biosphere, after cellulose. The polypeptide is Endo-1,4-beta-xylanase 2 (xyl2) (Claviceps purpurea (Ergot fungus)).